The primary structure comprises 210 residues: GRF1-interacting factor 1 (210 aa).

Low complexity predominate over residues A135–S152. The interval A135–N210 is disordered. The span at G182 to G198 shows a compositional bias: gly residues.

The protein belongs to the SS18 family. In terms of assembly, interacts with GRF1, GRF2, GRF5 and GRF9. Strongly expressed in actively growing and developing tissues, such as roots, upper stems, and shoot tips and flower buds. Also expressed in mature flowers. Not expressed in the shoot apical meristem (SAM). Highly accumulated in the proximal part of leaf primordia, in the key proliferative zone at the junction region between the leaf blade and leaf petiole.

In terms of biological role, transcription coactivator that plays a role in the regulation of cell expansion in leaf and cotyledons tissues. Component of a network formed by miR396, the GRFs and their interacting factors (GIFs) acting in the regulation of meristem function, at least partially through the control of cell proliferation. Appears to function synergistically with GRF1 as a transcriptional coactivator. Acts together with GRF5 for the development of appropriate leaf size and shape through the promotion and/or maintenance of cell proliferation activity in leaf primordia. Plays a role in adaxial/abaxial patterning and growth in leaf morphogenesis. GIFs are involved in the positive regulation of cell proliferation of lateral organs in a functionally redundant manner. Together with GATA18/HAN, mediates cotyledon identity by preventing ectopic root formation through the repression of PLT1 expression. The sequence is that of GRF1-interacting factor 1 from Arabidopsis thaliana (Mouse-ear cress).